We begin with the raw amino-acid sequence, 406 residues long: Inactive serine protease 35 (406 aa).

The first 17 residues, 1 to 17 (MLLWLIIFVSGWTLSLG), serve as a signal peptide directing secretion. An N-linked (GlcNAc...) asparagine glycan is attached at N87. One can recognise a Peptidase S1 domain in the interval 121-401 (VYGTDSRFSI…ICLWIHGNAA (281 aa)). C151 and C167 form a disulfide bridge. Basic residues predominate over residues 186–204 (LKMRNKGGRKKRRGSRRSR). A disordered region spans residues 186-248 (LKMRNKGGRK…RPSFQWTRVK (63 aa)).

This sequence belongs to the peptidase S1 family.

It is found in the secreted. The polypeptide is Inactive serine protease 35 (Prss35) (Rattus norvegicus (Rat)).